The sequence spans 387 residues: MEKVVIVDAIRTPMGRSKGGAFRQVRAEDLSAHLMRSLLSRNPQLEASAIDDIYWGCVQQTLEQGFNIARNAALLAEIPHSVPAVTVNRLCGSSMQALHDAARMIMTGDASVCLVGGVEHMGHVPMNHGVDFHPGLSRNVAKAAGMMGLTAEMLSRMHGISREMQDAFAARSHQRAWAATQAGHFKQEIIPTSGHDADGVLKRYDFDEVIRPETTAEGLSQLKPAFDPANGTVTAGTSSALSDGAAAMLVMSESRARELGLTPRARIRSMAVVGCDPSIMGYGPVPASKLALKKAGLTASDIDLFEMNEAFAAQILPCIKDLGLMEQIDEKINLNGGAIALGHPLGCSGARISTTLINLMERRDAELGLATMCIGLGQGIATVFERV.

C91 functions as the Acyl-thioester intermediate in the catalytic mechanism. Residues H343 and C373 each act as proton acceptor in the active site.

It belongs to the thiolase-like superfamily. Thiolase family. As to quaternary structure, heterotetramer of two alpha chains (FadB) and two beta chains (FadA).

Its subcellular location is the cytoplasm. It catalyses the reaction an acyl-CoA + acetyl-CoA = a 3-oxoacyl-CoA + CoA. It functions in the pathway lipid metabolism; fatty acid beta-oxidation. In terms of biological role, catalyzes the final step of fatty acid oxidation in which acetyl-CoA is released and the CoA ester of a fatty acid two carbons shorter is formed. The chain is 3-ketoacyl-CoA thiolase from Cronobacter sakazakii (strain ATCC BAA-894) (Enterobacter sakazakii).